The following is a 527-amino-acid chain: Coatomer subunit delta (527 aa).

Basic and acidic residues predominate over residues 166–175; sequence IDKSKIEKNK. Disordered regions lie at residues 166–187 and 217–250; these read IDKSKIEKNKPGGFSSMGSMGS and SDVDPINTKPKDRSRSSVTAPPKSSGMKLGKSGK. Low complexity-rich tracts occupy residues 177-187 and 239-250; these read GGFSSMGSMGS and KSSGMKLGKSGK. Residues 282–527 form the MHD domain; it reads TDPFTLTVEE…QLIAQNYQVI (246 aa).

The protein belongs to the adaptor complexes medium subunit family. Delta-COP subfamily. As to quaternary structure, oligomeric complex that consists of at least the alpha, beta, beta', gamma, delta, epsilon and zeta subunits.

It localises to the cytoplasm. The protein localises to the golgi apparatus membrane. It is found in the cytoplasmic vesicle. The protein resides in the COPI-coated vesicle membrane. In terms of biological role, the coatomer is a cytosolic protein complex that binds to dilysine motifs and reversibly associates with Golgi non-clathrin-coated vesicles, which further mediate biosynthetic protein transport from the ER, via the Golgi up to the trans Golgi network. Coatomer complex is required for budding from Golgi membranes, and is essential for the retrograde Golgi-to-ER transport of dilysine-tagged proteins. The sequence is that of Coatomer subunit delta from Arabidopsis thaliana (Mouse-ear cress).